A 263-amino-acid chain; its full sequence is Endonuclease 8 (263 aa).

P2 functions as the Schiff-base intermediate with DNA in the catalytic mechanism. E3 acts as the Proton donor in catalysis. Catalysis depends on K53, which acts as the Proton donor; for beta-elimination activity. DNA contacts are provided by Q70, R125, and N169. Residues 229–263 (KVFHRDGEACERCGGIIEKTTLSSRPFYWCPHCQK) form an FPG-type zinc finger. R253 functions as the Proton donor; for delta-elimination activity in the catalytic mechanism.

This sequence belongs to the FPG family. It depends on Zn(2+) as a cofactor.

It catalyses the reaction 2'-deoxyribonucleotide-(2'-deoxyribose 5'-phosphate)-2'-deoxyribonucleotide-DNA = a 3'-end 2'-deoxyribonucleotide-(2,3-dehydro-2,3-deoxyribose 5'-phosphate)-DNA + a 5'-end 5'-phospho-2'-deoxyribonucleoside-DNA + H(+). Its function is as follows. Involved in base excision repair of DNA damaged by oxidation or by mutagenic agents. Acts as a DNA glycosylase that recognizes and removes damaged bases. Has a preference for oxidized pyrimidines, such as thymine glycol, 5,6-dihydrouracil and 5,6-dihydrothymine. Has AP (apurinic/apyrimidinic) lyase activity and introduces nicks in the DNA strand. Cleaves the DNA backbone by beta-delta elimination to generate a single-strand break at the site of the removed base with both 3'- and 5'-phosphates. In Salmonella dublin (strain CT_02021853), this protein is Endonuclease 8.